The chain runs to 597 residues: Protein Spindly (597 aa).

An N-acetylmethionine modification is found at Met-1. Residues 1–445 (MEADITNLRN…LKLKYEPEER (445 aa)) are a coiled coil. Residues Ser-508 and Ser-547 each carry the phosphoserine modification. Positions 531 to 597 (PASTEVLHEQ…STPEMQCPQQ (67 aa)) are disordered. Positions 540 to 549 (QSGNTPSSPR) are enriched in polar residues. Basic and acidic residues predominate over residues 550–574 (LTEESRLPTKVKERKEATSKLEKGA). Polar residues predominate over residues 583–597 (YVSSKSTPEMQCPQQ).

It belongs to the Spindly family. As to quaternary structure, interacts with KNTC1 and ZW10. These interactions appear weak and may be transient or indirect. Interacts with dynein intermediate chain and dynactin (DCTN1). Interacts with the catalytically active form of USP45. In terms of processing, monoubiquitinated with'Lys-48' linkage. Deubiquitinated by USP45.

It is found in the cytoplasm. Its subcellular location is the cytoskeleton. The protein resides in the microtubule organizing center. It localises to the centrosome. The protein localises to the chromosome. It is found in the centromere. Its subcellular location is the kinetochore. The protein resides in the nucleus. It localises to the spindle pole. Required for the localization of dynein and dynactin to the mitotic kintochore. Dynein is believed to control the initial lateral interaction between the kinetochore and spindle microtubules and to facilitate the subsequent formation of end-on kinetochore-microtubule attachments mediated by the NDC80 complex. Also required for correct spindle orientation. Does not appear to be required for the removal of spindle assembly checkpoint (SAC) proteins from the kinetochore upon bipolar spindle attachment. Acts as an adapter protein linking the dynein motor complex to various cargos and converts dynein from a non-processive to a highly processive motor in the presence of dynactin. Facilitates the interaction between dynein and dynactin and activates dynein processivity (the ability to move along a microtubule for a long distance without falling off the track). Plays a role in cell migration. In Rattus norvegicus (Rat), this protein is Protein Spindly (Spdl1).